Reading from the N-terminus, the 591-residue chain is Serine/threonine-protein kinase Nek2 (591 aa).

The 255-residue stretch at 4–258 (YEVLEQIGKG…AAQLLKHPQL (255 aa)) folds into the Protein kinase domain. ATP contacts are provided by residues 10–18 (IGKGAFGSA) and Lys-33. Residue Asp-129 is the Proton acceptor of the active site. 3 disordered regions span residues 309-331 (LGNE…SSTR), 382-408 (ARNQ…TTPN), and 500-534 (RTDG…DTSS). Polar residues-rich tracts occupy residues 391-408 (TSYN…TTPN) and 504-534 (DNGS…DTSS).

It belongs to the protein kinase superfamily. NEK Ser/Thr protein kinase family. NIMA subfamily. Expressed in anthers, pistils and leaves.

The catalysed reaction is L-seryl-[protein] + ATP = O-phospho-L-seryl-[protein] + ADP + H(+). It carries out the reaction L-threonyl-[protein] + ATP = O-phospho-L-threonyl-[protein] + ADP + H(+). Functionally, may be involved in plant development processes. The chain is Serine/threonine-protein kinase Nek2 from Oryza sativa subsp. japonica (Rice).